The sequence spans 602 residues: Glutamine--fructose-6-phosphate aminotransferase [isomerizing] (602 aa).

The active-site Nucleophile; for GATase activity is Cys2. The 216-residue stretch at 2–217 (CGIVGVVGNT…DQELVIVKAD (216 aa)) folds into the Glutamine amidotransferase type-2 domain. The disordered stretch occupies residues 67–87 (IGHTRWATHGKPTEDNAHPHR). Residues 77–87 (KPTEDNAHPHR) are compositionally biased toward basic and acidic residues. 2 SIS domains span residues 283–422 (IIKA…ANGN) and 455–592 (VREL…VDKP). Lys597 (for Fru-6P isomerization activity) is an active-site residue.

As to quaternary structure, homodimer.

The protein resides in the cytoplasm. It carries out the reaction D-fructose 6-phosphate + L-glutamine = D-glucosamine 6-phosphate + L-glutamate. Its function is as follows. Catalyzes the first step in hexosamine metabolism, converting fructose-6P into glucosamine-6P using glutamine as a nitrogen source. The chain is Glutamine--fructose-6-phosphate aminotransferase [isomerizing] from Streptococcus pneumoniae (strain ATCC BAA-255 / R6).